A 465-amino-acid polypeptide reads, in one-letter code: Probable dipeptidase A (465 aa).

C3 is an active-site residue.

It belongs to the peptidase C69 family.

It carries out the reaction an L-aminoacyl-L-amino acid + H2O = 2 an L-alpha-amino acid. The protein is Probable dipeptidase A (pepDA) of Streptococcus pyogenes serotype M3 (strain SSI-1).